Reading from the N-terminus, the 125-residue chain is Large ribosomal subunit protein bL21 (125 aa).

Over residues 75–89 (FKKRRRQNSKRKRGH) the composition is skewed to basic residues. Disordered regions lie at residues 75–94 (FKKR…QDLT) and 103–125 (AGGA…APEA). Residues 106-125 (ASPAAAAASSETPAASAPEA) are compositionally biased toward low complexity.

This sequence belongs to the bacterial ribosomal protein bL21 family. Part of the 50S ribosomal subunit. Contacts protein L20.

This protein binds to 23S rRNA in the presence of protein L20. In Methylocella silvestris (strain DSM 15510 / CIP 108128 / LMG 27833 / NCIMB 13906 / BL2), this protein is Large ribosomal subunit protein bL21.